Here is a 95-residue protein sequence, read N- to C-terminus: Aspartyl/glutamyl-tRNA(Asn/Gln) amidotransferase subunit C (95 aa).

The protein belongs to the GatC family. Heterotrimer of A, B and C subunits.

The catalysed reaction is L-glutamyl-tRNA(Gln) + L-glutamine + ATP + H2O = L-glutaminyl-tRNA(Gln) + L-glutamate + ADP + phosphate + H(+). The enzyme catalyses L-aspartyl-tRNA(Asn) + L-glutamine + ATP + H2O = L-asparaginyl-tRNA(Asn) + L-glutamate + ADP + phosphate + 2 H(+). Its function is as follows. Allows the formation of correctly charged Asn-tRNA(Asn) or Gln-tRNA(Gln) through the transamidation of misacylated Asp-tRNA(Asn) or Glu-tRNA(Gln) in organisms which lack either or both of asparaginyl-tRNA or glutaminyl-tRNA synthetases. The reaction takes place in the presence of glutamine and ATP through an activated phospho-Asp-tRNA(Asn) or phospho-Glu-tRNA(Gln). This is Aspartyl/glutamyl-tRNA(Asn/Gln) amidotransferase subunit C from Bartonella quintana (strain Toulouse) (Rochalimaea quintana).